Here is a 266-residue protein sequence, read N- to C-terminus: Tryptophan synthase alpha chain (266 aa).

Catalysis depends on proton acceptor residues glutamate 49 and aspartate 60.

This sequence belongs to the TrpA family. In terms of assembly, tetramer of two alpha and two beta chains.

The catalysed reaction is (1S,2R)-1-C-(indol-3-yl)glycerol 3-phosphate + L-serine = D-glyceraldehyde 3-phosphate + L-tryptophan + H2O. Its pathway is amino-acid biosynthesis; L-tryptophan biosynthesis; L-tryptophan from chorismate: step 5/5. The alpha subunit is responsible for the aldol cleavage of indoleglycerol phosphate to indole and glyceraldehyde 3-phosphate. This chain is Tryptophan synthase alpha chain, found in Chloroflexus aurantiacus (strain ATCC 29364 / DSM 637 / Y-400-fl).